A 169-amino-acid polypeptide reads, in one-letter code: Thaumatin-like pathogenesis-related protein 3 (169 aa).

A signal peptide spans 1 to 21 (MATSSAVLFLLLAVFAAGASA).

It belongs to the thaumatin family.

Associated with resistance against stem rust fungi. This Avena sativa (Oat) protein is Thaumatin-like pathogenesis-related protein 3 (RASTL-3).